Here is a 446-residue protein sequence, read N- to C-terminus: Replication-associated recombination protein A (446 aa).

57–64 (GPPGTGKT) lines the ATP pocket.

This sequence belongs to the AAA ATPase family. RarA/MGS1/WRNIP1 subfamily.

Its function is as follows. DNA-dependent ATPase that plays important roles in cellular responses to stalled DNA replication processes. The sequence is that of Replication-associated recombination protein A (rarA) from Haemophilus influenzae (strain ATCC 51907 / DSM 11121 / KW20 / Rd).